A 72-amino-acid chain; its full sequence is Crustacean hyperglycemic hormone (72 aa).

3 disulfide bridges follow: cysteine 7-cysteine 43, cysteine 23-cysteine 39, and cysteine 26-cysteine 52. Valine 72 is subject to Valine amide.

The protein localises to the secreted. Hormone found in the sinus gland of isopods and decapods which controls the blood sugar level. Has a secretagogue action over the amylase released from the midgut gland. May act as a stress hormone and may be involved in the control of molting and reproduction. In Penaeus schmitti (White shrimp), this protein is Crustacean hyperglycemic hormone.